Here is a 470-residue protein sequence, read N- to C-terminus: D-serine/D-alanine/glycine transporter (470 aa).

The next 12 helical transmembrane spans lie at Leu-30–Ser-50, Leu-51–Met-71, Phe-102–Ile-122, Phe-128–Val-148, Phe-162–Met-182, Leu-211–Val-231, Ile-256–Val-276, Phe-283–Val-303, Phe-350–Gly-370, Ala-371–Leu-391, Pro-413–Leu-433, and Gln-441–Gly-461.

Belongs to the amino acid-polyamine-organocation (APC) superfamily. Amino acid transporter (AAT) (TC 2.A.3.1) family.

Its subcellular location is the cell inner membrane. The enzyme catalyses D-alanine(in) + H(+)(in) = D-alanine(out) + H(+)(out). It carries out the reaction D-serine(out) + H(+)(out) = D-serine(in) + H(+)(in). The catalysed reaction is glycine(in) + H(+)(in) = glycine(out) + H(+)(out). It catalyses the reaction D-cycloserine(in) + H(+)(in) = D-cycloserine(out) + H(+)(out). Its activity is regulated as follows. Uptake of D-serine is inhibited by D-alanine, D-cycloserine, glycine and at high concentrations of D-threonine. Permease that is involved in the transport across the cytoplasmic membrane of D-alanine, D-serine and glycine. Is the only transporter of D-alanine. Transports D-serine less efficiently than DsdX. In addition, in minimal media, transports the broad spectrum antibiotic D-cycloserine into the cell. Transports D-cycloserine only in minimal media, and not in a complex medium, suggesting that CycA does not play a role in D-cycloserine transport when E.coli is grown in a complex or biologically relevant medium, probably due to competition from other CycA substrates present in the medium. The polypeptide is D-serine/D-alanine/glycine transporter (cycA) (Escherichia coli O6:H1 (strain CFT073 / ATCC 700928 / UPEC)).